Reading from the N-terminus, the 191-residue chain is MQVLRNSGSWLLLSWAGHGMTRFVGIAPAKNIHTGAPRLEDSAARQNTEREAAPSRFSLYPPVPGQESSLQWAGMKFEDVPIAHIKATYNNTQIQVVSATNASLARASCGTEGFRNAKKGTGIAAQTAGIAAAAKATGKGVTHIRVVVKGMGPGRWSAIKGLTMGGLEVISITDNTPVPHNGCRPRKARRL.

Residues 37–62 are disordered; sequence PRLEDSAARQNTEREAAPSRFSLYPP. The span at 38 to 53 shows a compositional bias: basic and acidic residues; that stretch reads RLEDSAARQNTEREAA.

Belongs to the universal ribosomal protein uS11 family. In terms of assembly, component of the mitochondrial ribosome small subunit (28S) which comprises a 12S rRNA and about 30 distinct proteins.

The protein localises to the mitochondrion. The polypeptide is Small ribosomal subunit protein uS11m (Mrps11) (Mus musculus (Mouse)).